Reading from the N-terminus, the 364-residue chain is Glycerophosphodiester phosphodiesterase (364 aa).

Positions Met1 to Gly18 are cleaved as a signal peptide. A lipid anchor (N-palmitoyl cysteine) is attached at Cys19. A lipid anchor (S-diacylglycerol cysteine) is attached at Cys19. Residues Lys35–Leu360 form the GP-PDE domain. His40 serves as the catalytic Proton acceptor. Residues Glu67 and Asp69 each coordinate Ca(2+). Residue His82 is the Proton donor of the active site. Glu175 provides a ligand contact to Ca(2+).

Belongs to the glycerophosphoryl diester phosphodiesterase family. Ca(2+) serves as cofactor. Post-translationally, contains both ester- and amide-linked fatty acids.

The protein resides in the cell outer membrane. It catalyses the reaction a sn-glycero-3-phosphodiester + H2O = an alcohol + sn-glycerol 3-phosphate + H(+). In terms of biological role, glycerophosphodiester phosphodiesterase hydrolyzes glycerophosphodiesters into glycerol-3-phosphate (G3P) and the corresponding alcohol. Has a specific affinity for human immunoglobulin D myeloma protein. The protein is Glycerophosphodiester phosphodiesterase (glpQ) of Haemophilus influenzae (strain ATCC 51907 / DSM 11121 / KW20 / Rd).